The following is a 488-amino-acid chain: MSQSVESRTRIKNERYESGVIPYAKMGYWDADYQIKDTDVLAMFRMTPQKGVDPVECAAAIAGESSTATWTVVWTDLLTACDLYRAKAYRVDPVPGAADQYFAYIAYELDLFEEGSLANLTASIIGNVFGFKAVNALRLEDMRMPVAYLKTFQGPATGVIVERERLDKYGRPLLGATVKPKLGLSGKNYGRVVYEGLKGGLDFLKDDENINSQPFMRWKERFLFGMEGVNRAAAGTGEIKGHYFNITAGTMEDMYERAEFCKEIGTVICMIDLVIGYTAIQSMGIWARKNSMILHLHRAGNSTYSRQKTHGMNFRVICKWMRMAGVDHIHAGTVVGKLEGDPLMVKGFYDTLLEVKTEVNLVEGLFFAQDWASLAKCMPVASGGIHCGQMHQLINYLGDDVVLQFGGGTIGHPDGIQSGATANRVALECMVIARNEGRDYVNEGPDILRTAAKSCGPLQSALDLWKDITFNYASTDTADFVETATANR.

Substrate is bound by residues Asn127 and Thr177. Lys179 (proton acceptor) is an active-site residue. Position 181 (Lys181) interacts with substrate. 3 residues coordinate Mg(2+): Lys205, Asp207, and Glu208. Lys205 is subject to N6-carboxylysine. His297 functions as the Proton acceptor in the catalytic mechanism. Residues Arg298, His330, and Ser382 each coordinate substrate.

The protein belongs to the RuBisCO large chain family. Type I subfamily. As to quaternary structure, heterohexadecamer of 8 large chains and 8 small chains. It depends on Mg(2+) as a cofactor.

The protein resides in the plastid. The protein localises to the chloroplast. The catalysed reaction is 2 (2R)-3-phosphoglycerate + 2 H(+) = D-ribulose 1,5-bisphosphate + CO2 + H2O. It catalyses the reaction D-ribulose 1,5-bisphosphate + O2 = 2-phosphoglycolate + (2R)-3-phosphoglycerate + 2 H(+). Its function is as follows. RuBisCO catalyzes two reactions: the carboxylation of D-ribulose 1,5-bisphosphate, the primary event in carbon dioxide fixation, as well as the oxidative fragmentation of the pentose substrate in the photorespiration process. Both reactions occur simultaneously and in competition at the same active site. In Rhodomonas salina (Cryptomonas salina), this protein is Ribulose bisphosphate carboxylase large chain.